We begin with the raw amino-acid sequence, 213 residues long: Penicillin-binding protein activator LpoB (213 aa).

The N-terminal stretch at 1–19 (MMKMNRYALVAALAIFLSG) is a signal peptide. A lipid anchor (N-palmitoyl cysteine) is attached at Cys20. Cys20 is lipidated: S-diacylglycerol cysteine. Residues 26-71 (PAPVDEVKPAPEQPAEPQQPVPVVPSVPTIPQQPGPIEHEDQTAQP) are disordered. The segment covering 36-50 (PEQPAEPQQPVPVVP) has biased composition (pro residues).

Belongs to the LpoB family. As to quaternary structure, interacts with PBP1b.

The protein localises to the cell outer membrane. Functionally, regulator of peptidoglycan synthesis that is essential for the function of penicillin-binding protein 1B (PBP1b). The polypeptide is Penicillin-binding protein activator LpoB (Citrobacter koseri (strain ATCC BAA-895 / CDC 4225-83 / SGSC4696)).